Reading from the N-terminus, the 513-residue chain is Bone morphogenetic protein 6 (513 aa).

An N-terminal signal peptide occupies residues M1–S20. Residues C21–R374 constitute a propeptide that is removed on maturation. 3 disordered regions span residues A38–F66, L89–S131, and A145–L200. Over residues G98–R121 the composition is skewed to low complexity. Polar residues predominate over residues Q158–R172. Residues N241, N269, N386, N404, and N454 are each glycosylated (N-linked (GlcNAc...) asparagine). Positions T373 to S398 are disordered. Disulfide bonds link C412–C478, C441–C510, and C445–C512.

Belongs to the TGF-beta family. As to quaternary structure, interacts with SOSTDC1. Interacts (when glycosylated) with type I receptor ACVR1; the interaction may induce HAMP expression. Interacts with type II receptor ACVR2B. Interacts with Hemojuvelin/HJV. Interacts with ERFE; the interaction inhibits BMP-induced transcription of HAMP. Interacts with BMPR1A/ALK3. Forms heterodimers with BMP2 in vitro; the heterodimer then binds to its receptor BMPR1A /ALK3 and may induce HAMP expression. Glycosylated at Asn-454. Glycosylation is crucial for recognition by the activin receptor type I/ACVR1.

The protein localises to the secreted. Its function is as follows. Growth factor of the TGF-beta superfamily that plays essential roles in many developmental processes including cartilage and bone formation. Also plays an important role in the regulation of HAMP/hepcidin expression and iron metabolism by acting as a ligand for hemojuvelin/HJV. Also acts to promote expression of HAMP, potentially via the interaction with its receptor BMPR1A/ALK3. Initiates the canonical BMP signaling cascade by associating with type I receptor ACVR1 and type II receptor ACVR2B. In turn, ACVR1 propagates signal by phosphorylating SMAD1/5/8 that travel to the nucleus and act as activators and repressors of transcription of target. Can also signal through non-canonical pathway such as TAZ-Hippo signaling cascade to modulate VEGF signaling by regulating VEGFR2 expression. In Homo sapiens (Human), this protein is Bone morphogenetic protein 6 (BMP6).